The chain runs to 112 residues: MGFRVLVLVVMATTSALPFTFSEEPGRSPFRPALRSEEAQALRHGLTLLLARRADGQPPDMRQPEMRRPEVRQPEFAELSVGQRRWDVDQCMYYCLTGVVGYSYTECQTMCT.

Positions 1–22 are cleaved as a signal peptide; the sequence is MGFRVLVLVVMATTSALPFTFS. A propeptide spanning residues 23 to 85 is cleaved from the precursor; it reads EEPGRSPFRP…FAELSVGQRR (63 aa). Residues 53–74 are disordered; sequence RADGQPPDMRQPEMRRPEVRQP. Basic and acidic residues predominate over residues 62-74; it reads RQPEMRRPEVRQP. Intrachain disulfides connect Cys91–Cys111 and Cys95–Cys107.

It belongs to the conotoxin R superfamily. As to expression, expressed by the venom duct.

The protein localises to the secreted. In Conus villepinii (Villepin's cone), this protein is Conotoxin vil14.5.